The primary structure comprises 698 residues: Probable threonine--tRNA ligase 2, cytoplasmic (698 aa).

The region spanning 38 to 100 (GGGNIKLNDG…EMSGKDYNIE (63 aa)) is the TGS domain. The tract at residues 541-560 (NNNNNNNNNNEEINDNNNNN) is disordered.

The protein belongs to the class-II aminoacyl-tRNA synthetase family.

It localises to the cytoplasm. The catalysed reaction is tRNA(Thr) + L-threonine + ATP = L-threonyl-tRNA(Thr) + AMP + diphosphate + H(+). This chain is Probable threonine--tRNA ligase 2, cytoplasmic (thrS2), found in Dictyostelium discoideum (Social amoeba).